A 257-amino-acid polypeptide reads, in one-letter code: DNA repair protein RecO (257 aa).

Belongs to the RecO family.

Involved in DNA repair and RecF pathway recombination. In Streptococcus sanguinis (strain SK36), this protein is DNA repair protein RecO.